Here is a 184-residue protein sequence, read N- to C-terminus: Translation initiation factor IF-3 (184 aa).

It belongs to the IF-3 family. Monomer.

It is found in the cytoplasm. IF-3 binds to the 30S ribosomal subunit and shifts the equilibrium between 70S ribosomes and their 50S and 30S subunits in favor of the free subunits, thus enhancing the availability of 30S subunits on which protein synthesis initiation begins. This chain is Translation initiation factor IF-3, found in Mycoplasma genitalium (strain ATCC 33530 / DSM 19775 / NCTC 10195 / G37) (Mycoplasmoides genitalium).